The chain runs to 435 residues: Beta-arrestin arr-1 (435 aa).

Residues Leu358–Gly382 are disordered. Positions Lys362 to Arg372 are enriched in basic and acidic residues. Residues Leu390 to His394 carry the Clathrin box motif. The short motif at Asp404 to Arg414 is the [DE]-X(1,2)-F-X-X-[FL]-X-X-X-R motif element. A disordered region spans residues His416–Leu435. Residues Pro424–Leu435 are compositionally biased toward low complexity.

This sequence belongs to the arrestin family. In terms of assembly, component of a complex composed of arr-1, daf-18 and mpz-1. Within the complex, interacts (via C-terminus) with mpz-1 (via PDZ domain) and phosphatase daf-18. May interact (via C-terminus) with clathrin chc-1 and beta-2 adaptin (AP2) apb-1. In terms of tissue distribution, expressed in head neurons, nerve ring and ventral nerve cord (at protein level). Expressed in the nervous system including the nerve ring and the ventral and dorsal nerve cords. Highly expressed in amphid chemosensory neurons AWA, AWB, AWC, ADL and ASH, and in hermaphrodite specific neuron HSN. Also expressed in the intestine.

The protein resides in the perikaryon. It localises to the cell projection. The protein localises to the dendrite. Adapter protein required for olfactory adaptation and recovery to volatile odorants, probably by desensitization of G-protein coupled receptors (GPCR). May play a role in clathrin-mediated GPCR endocytosis. Acts as a positive regulator of insulin-like daf-2 signaling pathway probably by forming a complex with mpz-1 and phosphatase daf-18 likely resulting in daf-18 inhibition. Involved in egg-laying. The protein is Beta-arrestin arr-1 of Caenorhabditis elegans.